The following is a 623-amino-acid chain: Alpha-1,2-mannosyltransferase Alg9 (623 aa).

8 helical membrane-spanning segments follow: residues 152-172 (LIFYMVRCMLGFGCAVMERYM), 193-223 (LFSVGMFVSSTALLPSSFSMYFGCAALAAWW), 229-254 (FAIFLTAISALLGWPFAALIGIPLVL), 266-284 (FVQWTLISGATVAIPMIAI), 326-348 (FLNFNIIWLLALQLPIMLVIDYL), 360-378 (FPHYISLAPLYLWLLVFFA), 390-410 (IYPLISLCGAITVDVYQRIFF), and 431-452 (FIAILVMVTSTLLGLSRVFALY).

The protein belongs to the glycosyltransferase 22 family.

It is found in the endoplasmic reticulum membrane. It catalyses the reaction an alpha-D-Man-(1-&gt;2)-alpha-D-Man-(1-&gt;2)-alpha-D-Man-(1-&gt;3)-[alpha-D-Man-(1-&gt;3)-alpha-D-Man-(1-&gt;6)]-beta-D-Man-(1-&gt;4)-beta-D-GlcNAc-(1-&gt;4)-alpha-D-GlcNAc-diphospho-di-trans,poly-cis-dolichol + a di-trans,poly-cis-dolichyl beta-D-mannosyl phosphate = an alpha-D-Man-(1-&gt;2)-alpha-D-Man-(1-&gt;2)-alpha-D-Man-(1-&gt;3)-[alpha-D-Man-(1-&gt;2)-alpha-D-Man-(1-&gt;3)-alpha-D-Man-(1-&gt;6)]-beta-D-Man-(1-&gt;4)-beta-D-GlcNAc-(1-&gt;4)-alpha-D-GlcNAc-diphospho-di-trans,poly-cis-dolichol + a di-trans,poly-cis-dolichyl phosphate + H(+). The enzyme catalyses an alpha-D-Man-(1-&gt;2)-alpha-D-Man-(1-&gt;2)-alpha-D-Man-(1-&gt;3)-[alpha-D-Man-(1-&gt;2)-alpha-D-Man-(1-&gt;3)-[alpha-D-Man-(1-&gt;6)]-alpha-D-Man-(1-&gt;6)]-beta-D-Man-(1-&gt;4)-beta-D-GlcNAc-(1-&gt;4)-alpha-D-GlcNAc-diphospho-di-trans,poly-cis-dolichol + a di-trans,poly-cis-dolichyl beta-D-mannosyl phosphate = an alpha-D-Man-(1-&gt;2)-alpha-D-Man-(1-&gt;2)-alpha-D-Man-(1-&gt;3)-[alpha-D-Man-(1-&gt;2)-alpha-D-Man-(1-&gt;3)-[alpha-D-Man-(1-&gt;2)-alpha-D-Man-(1-&gt;6)]-alpha-D-Man-(1-&gt;6)]-beta-D-Man-(1-&gt;4)-beta-D-GlcNAc-(1-&gt;4)-alpha-D-GlcNAc-diphospho-di-trans,poly-cis-dolichol + a di-trans,poly-cis-dolichyl phosphate + H(+). The protein operates within protein modification; protein glycosylation. Probable alpha-1,2-mannosyltransferase involved in the N-glycosylation pathway. Probably involved in glycosylation of the TNF receptor grnd, regulating its ligand affinity. Required for normal epithelial growth and architecture. Suppressor of JNK-dependent intestinal stem cell proliferation. The polypeptide is Alpha-1,2-mannosyltransferase Alg9 (Drosophila melanogaster (Fruit fly)).